The chain runs to 39 residues: uncharacterized protein (39 aa).

Over residues 1–16 the composition is skewed to polar residues; sequence MLNIQPTQSIVNNQPK. The disordered stretch occupies residues 1 to 39; sequence MLNIQPTQSIVNNQPKSDQKKQKPADLLKEFYDKTGNRN. Basic and acidic residues predominate over residues 17 to 39; it reads SDQKKQKPADLLKEFYDKTGNRN.

This is an uncharacterized protein from Dictyostelium discoideum (Social amoeba).